The chain runs to 199 residues: MSQSSNITWHDSEVTKSDRQQQNGHKSVVIWFTGLSGSGKSTVSVELEKALFQLEKHSYRLDGDNVRHGLNKNLGFSPEDRKENIRRIGEVSKLLVDAGTIAITAFISPYRADRDEVREILEDGEFIEVYTECSVEACEQRDPKGLYKKARSGEIKEFTGISASYEAPHQPEITINTEHQSVEESVSTIIEYLKNKEII.

Positions 1–21 are disordered; it reads MSQSSNITWHDSEVTKSDRQQ. Positions 10–19 are enriched in basic and acidic residues; that stretch reads HDSEVTKSDR. 34 to 41 is an ATP binding site; the sequence is GLSGSGKS. Ser108 functions as the Phosphoserine intermediate in the catalytic mechanism.

Belongs to the APS kinase family.

It catalyses the reaction adenosine 5'-phosphosulfate + ATP = 3'-phosphoadenylyl sulfate + ADP + H(+). The protein operates within sulfur metabolism; hydrogen sulfide biosynthesis; sulfite from sulfate: step 2/3. Functionally, catalyzes the synthesis of activated sulfate. In Staphylococcus haemolyticus (strain JCSC1435), this protein is Adenylyl-sulfate kinase.